The primary structure comprises 157 residues: Small ribosomal subunit protein uS7 (157 aa).

Belongs to the universal ribosomal protein uS7 family. In terms of assembly, part of the 30S ribosomal subunit. Contacts proteins S9 and S11.

Functionally, one of the primary rRNA binding proteins, it binds directly to 16S rRNA where it nucleates assembly of the head domain of the 30S subunit. Is located at the subunit interface close to the decoding center, probably blocks exit of the E-site tRNA. The chain is Small ribosomal subunit protein uS7 from Chlamydia trachomatis serovar L2 (strain ATCC VR-902B / DSM 19102 / 434/Bu).